The chain runs to 201 residues: Pyridoxal 5'-phosphate synthase subunit PdxT (201 aa).

Residue 50–52 (GES) coordinates L-glutamine. The Nucleophile role is filled by cysteine 82. L-glutamine-binding positions include arginine 111 and 139-140 (IR). Catalysis depends on charge relay system residues histidine 180 and glutamate 182.

Belongs to the glutaminase PdxT/SNO family. In the presence of PdxS, forms a dodecamer of heterodimers. Only shows activity in the heterodimer.

The catalysed reaction is aldehydo-D-ribose 5-phosphate + D-glyceraldehyde 3-phosphate + L-glutamine = pyridoxal 5'-phosphate + L-glutamate + phosphate + 3 H2O + H(+). It catalyses the reaction L-glutamine + H2O = L-glutamate + NH4(+). Its pathway is cofactor biosynthesis; pyridoxal 5'-phosphate biosynthesis. Its function is as follows. Catalyzes the hydrolysis of glutamine to glutamate and ammonia as part of the biosynthesis of pyridoxal 5'-phosphate. The resulting ammonia molecule is channeled to the active site of PdxS. The sequence is that of Pyridoxal 5'-phosphate synthase subunit PdxT from Nocardioides sp. (strain ATCC BAA-499 / JS614).